Reading from the N-terminus, the 194-residue chain is Holliday junction branch migration complex subunit RuvA (194 aa).

The segment at 1 to 64 is domain I; it reads MIGRITGLLL…EDVHLLFGFM (64 aa). The tract at residues 65-140 is domain II; it reads TEQERALFRQ…KIDPVAILSE (76 aa). Residues 140 to 143 are flexible linker; it reads EAGA. A domain III region spans residues 144 to 194; it reads AASNVDKDILSALLALGYNGREVNRALEQLSEGVTVSDGIMQSLKFLSKVK.

Belongs to the RuvA family. As to quaternary structure, homotetramer. Forms an RuvA(8)-RuvB(12)-Holliday junction (HJ) complex. HJ DNA is sandwiched between 2 RuvA tetramers; dsDNA enters through RuvA and exits via RuvB. An RuvB hexamer assembles on each DNA strand where it exits the tetramer. Each RuvB hexamer is contacted by two RuvA subunits (via domain III) on 2 adjacent RuvB subunits; this complex drives branch migration. In the full resolvosome a probable DNA-RuvA(4)-RuvB(12)-RuvC(2) complex forms which resolves the HJ.

The protein resides in the cytoplasm. The RuvA-RuvB-RuvC complex processes Holliday junction (HJ) DNA during genetic recombination and DNA repair, while the RuvA-RuvB complex plays an important role in the rescue of blocked DNA replication forks via replication fork reversal (RFR). RuvA specifically binds to HJ cruciform DNA, conferring on it an open structure. The RuvB hexamer acts as an ATP-dependent pump, pulling dsDNA into and through the RuvAB complex. HJ branch migration allows RuvC to scan DNA until it finds its consensus sequence, where it cleaves and resolves the cruciform DNA. The polypeptide is Holliday junction branch migration complex subunit RuvA (Nitrosomonas eutropha (strain DSM 101675 / C91 / Nm57)).